We begin with the raw amino-acid sequence, 149 residues long: uncharacterized protein (149 aa).

This is an uncharacterized protein from Homo sapiens (Human).